The chain runs to 285 residues: Inositol oxygenase (285 aa).

Residue Arg29 coordinates substrate. Ser33 is subject to Phosphoserine. Substrate is bound at residue 85 to 87 (DES). Residues His98, His123, and Asp124 each contribute to the Fe cation site. Substrate contacts are provided by residues Lys127 and 141 to 142 (GD). Residues His194, His220, and Asp253 each contribute to the Fe cation site. Substrate is bound at residue 220–221 (HS).

This sequence belongs to the myo-inositol oxygenase family. The cofactor is Fe cation. As to expression, kidney specific.

It is found in the cytoplasm. It catalyses the reaction myo-inositol + O2 = D-glucuronate + H2O + H(+). It participates in polyol metabolism; myo-inositol degradation into D-glucuronate; D-glucuronate from myo-inositol: step 1/1. This Homo sapiens (Human) protein is Inositol oxygenase (MIOX).